A 420-amino-acid polypeptide reads, in one-letter code: UDP-N-acetylglucosamine 1-carboxyvinyltransferase (420 aa).

22 to 23 (KN) contacts phosphoenolpyruvate. Arginine 93 contacts UDP-N-acetyl-alpha-D-glucosamine. Residue cysteine 117 is the Proton donor of the active site. Cysteine 117 is subject to 2-(S-cysteinyl)pyruvic acid O-phosphothioketal. Positions 307 and 329 each coordinate UDP-N-acetyl-alpha-D-glucosamine.

Belongs to the EPSP synthase family. MurA subfamily.

It is found in the cytoplasm. The enzyme catalyses phosphoenolpyruvate + UDP-N-acetyl-alpha-D-glucosamine = UDP-N-acetyl-3-O-(1-carboxyvinyl)-alpha-D-glucosamine + phosphate. Its pathway is cell wall biogenesis; peptidoglycan biosynthesis. In terms of biological role, cell wall formation. Adds enolpyruvyl to UDP-N-acetylglucosamine. This is UDP-N-acetylglucosamine 1-carboxyvinyltransferase from Alcanivorax borkumensis (strain ATCC 700651 / DSM 11573 / NCIMB 13689 / SK2).